Reading from the N-terminus, the 327-residue chain is MSFVAHPNIDPKSLGKVGVLLGGKSAEREISLLSGNGVLAALKSRGVDAHPFDPGLQPISELAAAGFDRVFIALHGRYGEDGTMQGLLEQLGIPYTGSGVLASALAMDKQATKRLWMTHGLATPRFAMLYANTDFDAVVADLGLPLIVKPAREGSSIGLTKVIAADQMRAAFEKAAGLDADVIAETFIDGAELTCPIVGEGPTAEALPVIKIVAPESNYDYQNKYFTDDTQYLCPSTLPDALEREVRALAVEAFRVLGCRGWARADVMLTRDGKPYLLEMNTSPGMTGHSLVPMAARANGISYEDFVMQVLAAATLDLHPNEHWKPE.

The ATP-grasp domain maps to 113–312 (KRLWMTHGLA…YEDFVMQVLA (200 aa)). 139 to 194 (VADLGLPLIVKPAREGSSIGLTKVIAADQMRAAFEKAAGLDADVIAETFIDGAELT) lines the ATP pocket. Mg(2+) is bound by residues Asp266, Glu279, and Asn281.

This sequence belongs to the D-alanine--D-alanine ligase family. Mg(2+) is required as a cofactor. It depends on Mn(2+) as a cofactor.

The protein localises to the cytoplasm. The catalysed reaction is 2 D-alanine + ATP = D-alanyl-D-alanine + ADP + phosphate + H(+). It functions in the pathway cell wall biogenesis; peptidoglycan biosynthesis. Its function is as follows. Cell wall formation. This chain is D-alanine--D-alanine ligase, found in Cupriavidus metallidurans (strain ATCC 43123 / DSM 2839 / NBRC 102507 / CH34) (Ralstonia metallidurans).